Here is a 101-residue protein sequence, read N- to C-terminus: Small ribosomal subunit protein uS14A (101 aa).

The tract at residues I31–R69 is disordered. A compositionally biased stretch (basic and acidic residues) spans P38 to R53.

The protein belongs to the universal ribosomal protein uS14 family. As to quaternary structure, part of the 30S ribosomal subunit. Contacts proteins S3 and S10.

Binds 16S rRNA, required for the assembly of 30S particles and may also be responsible for determining the conformation of the 16S rRNA at the A site. In Saccharopolyspora erythraea (strain ATCC 11635 / DSM 40517 / JCM 4748 / NBRC 13426 / NCIMB 8594 / NRRL 2338), this protein is Small ribosomal subunit protein uS14A.